The sequence spans 86 residues: Small ribosomal subunit protein bS16 (86 aa).

Belongs to the bacterial ribosomal protein bS16 family.

The protein is Small ribosomal subunit protein bS16 of Xylella fastidiosa (strain 9a5c).